Reading from the N-terminus, the 103-residue chain is Large ribosomal subunit protein uL24 (103 aa).

It belongs to the universal ribosomal protein uL24 family. As to quaternary structure, part of the 50S ribosomal subunit.

Its function is as follows. One of two assembly initiator proteins, it binds directly to the 5'-end of the 23S rRNA, where it nucleates assembly of the 50S subunit. One of the proteins that surrounds the polypeptide exit tunnel on the outside of the subunit. The protein is Large ribosomal subunit protein uL24 of Enterococcus faecalis (strain ATCC 700802 / V583).